Reading from the N-terminus, the 235-residue chain is MLTLIAILAISYLVGAIPTGIMAGKMLKGIDIRQFGSGNAGGTNAFRVLGWKAGLAVTLLDILKGIVAAVSIVAFFRHHPVGAFPDINEVALRLLAGMSAVIGHVFTVFAGFKGGKGVSTAAGMLIGIAPVSMLIVIGIFLLTVYVSRYVSVASILAAIAFPLIIAIRKYIFELGGGLDYYVKLFGERFSFHDSLDYHLMIFGLIVALAILYTHRANIRRLLSGTENRIKFGRHS.

Helical transmembrane passes span 4–24 (LIAI…IMAG), 56–76 (AVTL…VAFF), 94–114 (LLAG…GFKG), 122–142 (AGML…IFLL), 152–172 (VASI…KYIF), and 191–211 (FHDS…LAIL).

The protein belongs to the PlsY family. In terms of assembly, probably interacts with PlsX.

It is found in the cell inner membrane. It catalyses the reaction an acyl phosphate + sn-glycerol 3-phosphate = a 1-acyl-sn-glycero-3-phosphate + phosphate. It participates in lipid metabolism; phospholipid metabolism. Catalyzes the transfer of an acyl group from acyl-phosphate (acyl-PO(4)) to glycerol-3-phosphate (G3P) to form lysophosphatidic acid (LPA). This enzyme utilizes acyl-phosphate as fatty acyl donor, but not acyl-CoA or acyl-ACP. The protein is Glycerol-3-phosphate acyltransferase of Chlorobium phaeobacteroides (strain DSM 266 / SMG 266 / 2430).